The chain runs to 241 residues: Small ribosomal subunit protein bS6 (241 aa).

Positions 97–108 are enriched in basic residues; it reads KPKIRERNRKYT. Residues 97-241 form a disordered region; it reads KPKIRERNRK…YNNKKPQSSN (145 aa). Residues 109 to 118 show a composition bias toward basic and acidic residues; sequence PRRDRFEKPN. 2 stretches are compositionally biased toward low complexity: residues 130–151 and 161–182; these read QDQQATKNQQNFQQNQQNQTSQ and DDFQQVSSNQQNFGQNQQNQSG. Over residues 189–202 the composition is skewed to polar residues; sequence RQNQENIHQNSKNH.

This sequence belongs to the bacterial ribosomal protein bS6 family.

In terms of biological role, binds together with bS18 to 16S ribosomal RNA. The chain is Small ribosomal subunit protein bS6 from Mesomycoplasma hyopneumoniae (strain 232) (Mycoplasma hyopneumoniae).